The chain runs to 363 residues: RNA polymerase II holoenzyme cyclin-like subunit (363 aa).

The region spanning 53 to 143 is the Cyclin N-terminal domain; that stretch reads YQMLRLAKNL…IGECEFWLIS (91 aa). The interval 252 to 312 is disordered; sequence TPGGSGSPAM…SPQKEKSKLQ (61 aa). Residues 265 to 276 are compositionally biased toward polar residues; sequence IQQNPPNQAYQL. Residues 277–298 show a composition bias toward low complexity; it reads TPQQQEMFRQQQMQQQNRQPET. Residues 299–310 are compositionally biased toward basic and acidic residues; the sequence is QAKDSPQKEKSK.

This sequence belongs to the cyclin family. Cyclin C subfamily. In terms of assembly, component of the SRB8-11 complex, a regulatory module of the Mediator complex.

It localises to the nucleus. Its function is as follows. Component of the SRB8-11 complex. The SRB8-11 complex is a regulatory module of the Mediator complex which is itself involved in regulation of basal and activated RNA polymerase II-dependent transcription. The SRB8-11 complex may be involved in the transcriptional repression of a subset of genes regulated by Mediator. It may inhibit the association of the Mediator complex with RNA polymerase II to form the holoenzyme complex. The SRB8-11 complex phosphorylates the C-terminal domain (CTD) of the largest subunit of RNA polymerase II. In Pyricularia oryzae (strain 70-15 / ATCC MYA-4617 / FGSC 8958) (Rice blast fungus), this protein is RNA polymerase II holoenzyme cyclin-like subunit (SSN8).